The primary structure comprises 255 residues: Protein BEAN1 (255 aa).

A helical membrane pass occupies residues 37–57 (VLVASAVIGVVITLSCITIIV). Positions 69–90 (QRHHHRHRRHHHHHRHRRRRHR) are enriched in basic residues. Disordered regions lie at residues 69–109 (QRHH…MPYA) and 160–255 (DAPP…ERIV). The span at 193–206 (QRTQGQSRLHTVSM) shows a compositional bias: polar residues. Residues 217–226 (GTGSPSDLLP) are compositionally biased toward low complexity. Over residues 234 to 243 (PSNSQGSPIP) the composition is skewed to polar residues. Over residues 244–255 (TQAPMPSPERIV) the composition is skewed to pro residues.

Interacts with NEDD4.

Its subcellular location is the membrane. The polypeptide is Protein BEAN1 (Bean1) (Mus musculus (Mouse)).